Here is a 273-residue protein sequence, read N- to C-terminus: MLKLVDNTTTRDYISHHLSHLQLNLNNFTLVNHPDIKSFWILNIDSIFFTLLLGIIFLLIFFYTAKTATSGIPSKLQTIVELLVSFIDKNVNDILFCKNKLIAPLALTIFIWIFLMNLMDLLAVDMLPYIAMYILHIPALRVVPSADINITLSLALGVFILIIYYNLKIKGITGFIKELTMQPFNHLIFIPLNFILESVSLLSKPISLALRLFGNIYAGELVFILIAGLLPWWSQWIISVPWALFHIIVITLQAFIFMVLTVVYIAMAYEQHK.

A run of 7 helical transmembrane segments spans residues 41–61 (ILNI…LLIF), 101–121 (LIAP…LMDL), 122–142 (LAVD…ALRV), 143–163 (VPSA…ILII), 183–203 (PFNH…SLLS), 221–241 (LVFI…ISVP), and 247–267 (IIVI…YIAM).

Belongs to the ATPase A chain family. In terms of assembly, F-type ATPases have 2 components, CF(1) - the catalytic core - and CF(0) - the membrane proton channel. CF(1) has five subunits: alpha(3), beta(3), gamma(1), delta(1), epsilon(1). CF(0) has three main subunits: a(1), b(2) and c(9-12). The alpha and beta chains form an alternating ring which encloses part of the gamma chain. CF(1) is attached to CF(0) by a central stalk formed by the gamma and epsilon chains, while a peripheral stalk is formed by the delta and b chains.

Its subcellular location is the cell membrane. In terms of biological role, key component of the proton channel; it plays a direct role in the translocation of protons across the membrane. The sequence is that of ATP synthase subunit a from Baumannia cicadellinicola subsp. Homalodisca coagulata.